Reading from the N-terminus, the 98-residue chain is DNA-binding protein Fis (98 aa).

A DNA-binding region (H-T-H motif) is located at residues 74-93 (QTRAATMLGINRGTLRKKLK).

Belongs to the transcriptional regulatory Fis family. In terms of assembly, homodimer.

In terms of biological role, activates ribosomal RNA transcription. Plays a direct role in upstream activation of rRNA promoters. The polypeptide is DNA-binding protein Fis (Glaesserella parasuis serovar 5 (strain SH0165) (Haemophilus parasuis)).